The primary structure comprises 768 residues: Putative calcium up-regulated protein H (768 aa).

The disordered stretch occupies residues 1–22; sequence MINIEDISKSSNQSEEKQLKST. Ricin B-type lectin domains are found at residues 25-145 and 116-248; these read KPKY…WTTF and QGNG…WGIN.

It belongs to the cup family.

Its subcellular location is the cytoplasm. The protein localises to the membrane. May play an important role in stabilizing and/or regulating the cell membrane during Ca(2+) stress or certain stages of development. This is Putative calcium up-regulated protein H (cupH) from Dictyostelium discoideum (Social amoeba).